Here is a 138-residue protein sequence, read N- to C-terminus: MLQPKRTKFRKPHKVSYEGKAKGNKQVDFGEFGLMALEGAWIDARQIESARIAISKRLLKTGKMWIRIFPHMSLTKKPLEVRMGSGKGSPEKWVAVVKAGTVMFEIANVSEELMCEALRAAGNKLPIKVKIVKKGEAN.

Belongs to the universal ribosomal protein uL16 family. As to quaternary structure, part of the 50S ribosomal subunit.

In terms of biological role, binds 23S rRNA and is also seen to make contacts with the A and possibly P site tRNAs. This is Large ribosomal subunit protein uL16 from Ureaplasma parvum serovar 3 (strain ATCC 27815 / 27 / NCTC 11736).